A 290-amino-acid chain; its full sequence is NH(3)-dependent NAD(+) synthetase (290 aa).

33 to 40 (GVSGGVDS) is an ATP binding site. Residue aspartate 39 coordinates Mg(2+). Position 154 (arginine 154) interacts with deamido-NAD(+). ATP is bound at residue threonine 174. Mg(2+) is bound at residue glutamate 179. The deamido-NAD(+) site is built by lysine 187 and aspartate 194. Residues lysine 203 and serine 225 each contribute to the ATP site.

Belongs to the NAD synthetase family. In terms of assembly, homodimer.

It carries out the reaction deamido-NAD(+) + NH4(+) + ATP = AMP + diphosphate + NAD(+) + H(+). It functions in the pathway cofactor biosynthesis; NAD(+) biosynthesis; NAD(+) from deamido-NAD(+) (ammonia route): step 1/1. Its function is as follows. Catalyzes the ATP-dependent amidation of deamido-NAD to form NAD. Uses ammonia as a nitrogen source. In Thermotoga neapolitana (strain ATCC 49049 / DSM 4359 / NBRC 107923 / NS-E), this protein is NH(3)-dependent NAD(+) synthetase.